The sequence spans 708 residues: UvrABC system protein B (708 aa).

Residues 32–419 (EGIQSGKTAQ…GGEVVEQIIR (388 aa)) enclose the Helicase ATP-binding domain. 45–52 (GATGTGKT) lines the ATP pocket. A Beta-hairpin motif is present at residues 98–121 (YYDYYQPEAYIPQRDVYIEKDSSI). The Helicase C-terminal domain maps to 436-598 (QVTHLLEQVR…IVPKTVRKSI (163 aa)). In terms of domain architecture, UVR spans 627–662 (IEYVDKLEQEMLAAAEDLEFERAARLRDRVLQLKEH). Residues 668–708 (SEVEIVDEKSAGKSGGRGRGRRGAKKKGASKGTKIPRPKRG) are disordered. The span at 683–708 (GRGRGRRGAKKKGASKGTKIPRPKRG) shows a compositional bias: basic residues.

This sequence belongs to the UvrB family. Forms a heterotetramer with UvrA during the search for lesions. Interacts with UvrC in an incision complex.

The protein localises to the cytoplasm. The UvrABC repair system catalyzes the recognition and processing of DNA lesions. A damage recognition complex composed of 2 UvrA and 2 UvrB subunits scans DNA for abnormalities. Upon binding of the UvrA(2)B(2) complex to a putative damaged site, the DNA wraps around one UvrB monomer. DNA wrap is dependent on ATP binding by UvrB and probably causes local melting of the DNA helix, facilitating insertion of UvrB beta-hairpin between the DNA strands. Then UvrB probes one DNA strand for the presence of a lesion. If a lesion is found the UvrA subunits dissociate and the UvrB-DNA preincision complex is formed. This complex is subsequently bound by UvrC and the second UvrB is released. If no lesion is found, the DNA wraps around the other UvrB subunit that will check the other stand for damage. The sequence is that of UvrABC system protein B from Rhodopirellula baltica (strain DSM 10527 / NCIMB 13988 / SH1).